The chain runs to 1005 residues: Ephrin type-A receptor 8 (1005 aa).

A signal peptide spans 1–27; sequence MAPARGRLPPALWVVTAAAAAATCVSA. Residues 28–542 lie on the Extracellular side of the membrane; that stretch reads ARGEVNLLDT…KPRPRYDTRT (515 aa). The Eph LBD domain maps to 31 to 209; it reads EVNLLDTSTI…YYKKCPAMVR (179 aa). 2 consecutive Fibronectin type-III domains span residues 328 to 438 and 439 to 534; these read PPSA…TNQA and APSQ…TGKP. 3 N-linked (GlcNAc...) asparagine glycosylation sites follow: N340, N407, and N432. A helical membrane pass occupies residues 543 to 563; that stretch reads IVWICLTLITGLVVLLLLLIC. Positions 564–570 are mediates interaction with ANKS1A and ANKS1B; sequence KKRHCGY. The Cytoplasmic portion of the chain corresponds to 564–1005; sequence KKRHCGYSKA…TSTQGPRRHL (442 aa). The interval 589–644 is mediates interaction with PIK3CG and required for endocytosis; sequence APPPVFLPLHHPPGKLPEPQFYAEPHTYEEPGRAGRSFTREIEASRIHIEKIIGSG. Phosphotyrosine; by autocatalysis is present on Y616. Residues 635–896 form the Protein kinase domain; that stretch reads IHIEKIIGSG…QIVSVLDALI (262 aa). ATP-binding positions include 641 to 649 and K667; that span reads IGSGDSGEV. D760 (proton acceptor) is an active-site residue. Residue Y839 is modified to Phosphotyrosine; by autocatalysis. The SAM domain maps to 930–994; that stretch reads GGGLTVGDWL…LGSIQTMRAQ (65 aa). The short motif at 1003-1005 is the PDZ-binding element; sequence RHL.

It belongs to the protein kinase superfamily. Tyr protein kinase family. Ephrin receptor subfamily. Heterotetramer upon binding of the ligand. The heterotetramer is composed of an ephrin dimer and a receptor dimer. Oligomerization is probably required to induce biological responses. May also form heterodimers with other ephrin receptors. Interacts with FYN; possible downstream effector of EPHA8 in regulation of cell adhesion. Interacts with PIK3CG; regulates integrin-mediated cell adhesion to substrate. Interacts with TIAM1; regulates clathrin-mediated endocytosis of EPHA8. Interacts with ANKS1A and ANKS1B; EPHA8 kinase activity-independent but stimulated by EPHA8 ubiquitination. Post-translationally, phosphorylated. Phosphorylation is stimulated upon binding of its ligands including EFNA2, EFNA3 and EFNA5. Autophosphorylation on Tyr-616 is critical for association with FYN. Autophosphorylation on Tyr-839 modulates tyrosine kinase activity. Ubiquitinated. Ubiquitination by CBL regulates the receptor stability and activity through proteasomal degradation. ANKS1A prevents ubiquitination and degradation.

The protein resides in the cell membrane. It localises to the cell projection. The protein localises to the early endosome membrane. It catalyses the reaction L-tyrosyl-[protein] + ATP = O-phospho-L-tyrosyl-[protein] + ADP + H(+). Its function is as follows. Receptor tyrosine kinase which binds promiscuously GPI-anchored ephrin-A family ligands residing on adjacent cells, leading to contact-dependent bidirectional signaling into neighboring cells. The signaling pathway downstream of the receptor is referred to as forward signaling while the signaling pathway downstream of the ephrin ligand is referred to as reverse signaling. The GPI-anchored ephrin-A EFNA2, EFNA3, and EFNA5 are able to activate EPHA8 through phosphorylation. With EFNA5 may regulate integrin-mediated cell adhesion and migration on fibronectin substrate but also neurite outgrowth. During development of the nervous system also plays a role in axon guidance. Downstream effectors of the EPHA8 signaling pathway include FYN which promotes cell adhesion upon activation by EPHA8 and the MAP kinases in the stimulation of neurite outgrowth. The polypeptide is Ephrin type-A receptor 8 (EPHA8) (Homo sapiens (Human)).